A 293-amino-acid polypeptide reads, in one-letter code: Ribosomal protein L11 methyltransferase (293 aa).

Threonine 145, glycine 166, aspartate 188, and asparagine 230 together coordinate S-adenosyl-L-methionine.

Belongs to the methyltransferase superfamily. PrmA family.

It is found in the cytoplasm. It catalyses the reaction L-lysyl-[protein] + 3 S-adenosyl-L-methionine = N(6),N(6),N(6)-trimethyl-L-lysyl-[protein] + 3 S-adenosyl-L-homocysteine + 3 H(+). Its function is as follows. Methylates ribosomal protein L11. The sequence is that of Ribosomal protein L11 methyltransferase from Salmonella dublin (strain CT_02021853).